The following is a 120-amino-acid chain: Acyl carrier protein, mitochondrial (120 aa).

Residues 43–117 (KEITDRVIGV…ETISYLRKTP (75 aa)) form the Carrier domain. O-(pantetheine 4'-phosphoryl)serine is present on Ser-77.

The protein belongs to the acyl carrier protein (ACP) family. As to quaternary structure, complex I is composed of about 45 different subunits. In terms of processing, 4'-phosphopantetheine is transferred from CoA to a specific serine of apo-ACP by acpS. This modification is essential for activity because fatty acids are bound in thioester linkage to the sulfhydryl of the prosthetic group.

It localises to the mitochondrion. The protein operates within lipid metabolism; fatty acid biosynthesis. Carrier of the growing fatty acid chain in fatty acid biosynthesis. May be involved in the synthesis of very-long-chain fatty acids. Accessory and non-catalytic subunit of the mitochondrial membrane respiratory chain NADH dehydrogenase (Complex I), which functions in the transfer of electrons from NADH to the respiratory chain. The polypeptide is Acyl carrier protein, mitochondrial (ndufab1) (Dictyostelium discoideum (Social amoeba)).